The following is a 497-amino-acid chain: Guanosine-5'-triphosphate,3'-diphosphate pyrophosphatase (497 aa).

It belongs to the GppA/Ppx family. GppA subfamily.

The catalysed reaction is guanosine 3'-diphosphate 5'-triphosphate + H2O = guanosine 3',5'-bis(diphosphate) + phosphate + H(+). It participates in purine metabolism; ppGpp biosynthesis; ppGpp from GTP: step 2/2. Catalyzes the conversion of pppGpp to ppGpp. Guanosine pentaphosphate (pppGpp) is a cytoplasmic signaling molecule which together with ppGpp controls the 'stringent response', an adaptive process that allows bacteria to respond to amino acid starvation, resulting in the coordinated regulation of numerous cellular activities. The chain is Guanosine-5'-triphosphate,3'-diphosphate pyrophosphatase from Aliivibrio fischeri (strain ATCC 700601 / ES114) (Vibrio fischeri).